The sequence spans 318 residues: NADH-ubiquinone oxidoreductase chain 1 (318 aa).

A run of 8 helical transmembrane segments spans residues 2–22, 68–88, 100–120, 147–167, 172–192, 217–237, 253–273, and 294–314; these read FMINVLTLIIPILLAVAFLTL, ISMFILAPILALTLALTMWIP, LGVLFMLAMSSLAVYSILWSG, AIILLSVLLMNGSFTLSTLII, VWLIFPAWPLAMMWFISTLAE, AGPFALFFMAEYANIIMMNIF, ELYTINFTIKSLLLSITFLWI, and LPLTLALCMWHVSLPILLSSI.

It belongs to the complex I subunit 1 family.

It localises to the mitochondrion inner membrane. It carries out the reaction a ubiquinone + NADH + 5 H(+)(in) = a ubiquinol + NAD(+) + 4 H(+)(out). Its function is as follows. Core subunit of the mitochondrial membrane respiratory chain NADH dehydrogenase (Complex I) that is believed to belong to the minimal assembly required for catalysis. Complex I functions in the transfer of electrons from NADH to the respiratory chain. The immediate electron acceptor for the enzyme is believed to be ubiquinone. The sequence is that of NADH-ubiquinone oxidoreductase chain 1 (MT-ND1) from Ovis aries (Sheep).